A 189-amino-acid chain; its full sequence is dTTP/UTP pyrophosphatase (189 aa).

D73 (proton acceptor) is an active-site residue.

This sequence belongs to the Maf family. YhdE subfamily. A divalent metal cation is required as a cofactor.

The protein localises to the cytoplasm. The enzyme catalyses dTTP + H2O = dTMP + diphosphate + H(+). It catalyses the reaction UTP + H2O = UMP + diphosphate + H(+). Functionally, nucleoside triphosphate pyrophosphatase that hydrolyzes dTTP and UTP. May have a dual role in cell division arrest and in preventing the incorporation of modified nucleotides into cellular nucleic acids. The protein is dTTP/UTP pyrophosphatase of Vibrio parahaemolyticus serotype O3:K6 (strain RIMD 2210633).